We begin with the raw amino-acid sequence, 890 residues long: MSQPFRSADIRQAFIDFFISKQHTPVASSSLIPHNDPTLLFTNAGMNQFKETFLGMEPRDYTRAVTSQKCVRAGGKHNDLDNVGYTARHHTFFEMLGNFSFGDYFKQAGIGYIWEFLTSDEWLAIDKNRLYVTIYETDDEAFDIWHKDIGIPSERIIRIGDNKGAPYASDNFWTMGDTGPCGPCTEVFYDHGADIEGGLPGTPEEDGDRYIEIWNCVFMQFNRQKDGTMLPLPAPSVDTGMGLERISAIMQGVHGNYEIDLFVHLMDAAAEILEIENQQQSSLKVIADHIRAVSFLIADGVTPSNEGRGYVLRRVIRRAVRHGNKLGADSDFFYKMVAPLVAEMGIAYPELKDKQSVIENTIQKEEAQFAKTLAQGLRLLASELEGLQDGDTLSGEAAFKLYDTYGFPVDLTADITRERGIVIDEAEFDEHMQAQRERARDAGKFDVDYSSVIQVENPTTFIGYEQLEQEGVAIDALYQDGNPADSLTEGMEGVVVLDRTPFYAEGGGQVGELGEIRTATGVFDVQDTKKSGQAIIHYGVVTMGEIKTKQTADAQVLSSIRAASAKNHSATHLLHAALREVLGDAVTQKGSLVSSEVLRFDFSYDKPVSPAEIMRIERLVNEQIQANTPTRIENMPIDEAIKQGAMALFGEKYGNDVRVLTMGTDSIVDGQRMPFSIELCGGLHVQRTGDIGVLKITSESGIAAGIRRIEAVTAMNAIKNIQQSEQQLSELASQLKVKRPEVAQRVRTMADKQRDLEKQLERLEQKIASAQAANLLDEVQTIAGIPLLISTLSGVDGKSIRTLMDDIKSKLPDSVIVLIGDKDEQLALAANVAKSVTDRIKAGDIIRYLAGELGGKGGGKPDYAQGGAPKSNNSAAVIAALPAWVAAQLS.

Positions 568, 572, 680, and 684 each coordinate Zn(2+).

Belongs to the class-II aminoacyl-tRNA synthetase family. It depends on Zn(2+) as a cofactor.

The protein resides in the cytoplasm. The catalysed reaction is tRNA(Ala) + L-alanine + ATP = L-alanyl-tRNA(Ala) + AMP + diphosphate. Catalyzes the attachment of alanine to tRNA(Ala) in a two-step reaction: alanine is first activated by ATP to form Ala-AMP and then transferred to the acceptor end of tRNA(Ala). Also edits incorrectly charged Ser-tRNA(Ala) and Gly-tRNA(Ala) via its editing domain. This chain is Alanine--tRNA ligase, found in Psychrobacter arcticus (strain DSM 17307 / VKM B-2377 / 273-4).